The following is a 215-amino-acid chain: EFC-associated protein OPG053 (215 aa).

Intrachain disulfides connect C33–C55, C47–C128, and C108–C150. The helical transmembrane segment at 179 to 199 (PWFIFSIIIIAIIFVIGICSI) threads the bilayer.

This sequence belongs to the orthopoxvirus OPG053 family. In terms of assembly, component of the entry fusion complex (EFC) composed of OPG053, OPG076, OPG086, OPG094, OPG095, OPG099, OPG107, OPG143, OPG104, OPG147 and OPG155. Except for OPG095 and OPG052, each of the EFC proteins is required for assembly or stability of the complex. Post-translationally, disulfid bonds are oxidized in the cytoplasm by OPG088 protein. In terms of processing, unglycosylated because produced in viral factories instead of the classic ER -Golgi route.

The protein resides in the virion membrane. In terms of biological role, component of the entry fusion complex (EFC), which consists of 11 proteins. During cell infection, this complex mediates entry of the virion core into the host cytoplasm by a two-step mechanism consisting of lipid mixing of the viral and cellular membranes and subsequent pore formation. This is EFC-associated protein OPG053 (OPG053) from Sus scrofa (Pig).